Consider the following 1090-residue polypeptide: Solute carrier family 38 member 10 (1090 aa).

The next 10 membrane-spanning stretches (helical) occupy residues 9-31 (WGLITNVVNSIVGVSVLTMPFCF), 36-58 (IVLGALLLVFCSWMTHQSCMFLV), 84-104 (LVETSMIGLMLGSCITFYVVI), 123-143 (TVRVFLLFAVSLFIVLPLSLQ), 153-173 (FSAMALLFYTVFMFVIVLSSL), 229-249 (IFASSLNVVTAFYVMVGFFGY), 272-292 (MIRVGFVMSVAVGFPMMILPC), 323-343 (VLTLSVVFGTMVGGVMIPNVE), 345-365 (ILGFTGATMGSLICFICPALI), and 378-398 (VVLWVGLGILVVSTLTTLSVT). Serine 441 carries the phosphoserine modification. Basic and acidic residues-rich tracts occupy residues 441 to 454 (SQEKLKPAEDKEVL), 493 to 508 (EAHRHEPPIPHDKVVV), 517 to 528 (PEEKKPPPRLPD), 544 to 560 (ESEKEKQEPERGGEGKR), 587 to 596 (PRKEDSRPGN), and 607 to 623 (DSVELKALAADDGREPA). Disordered stretches follow at residues 441–675 (SQEK…AGSK), 729–831 (EIRQ…IDLR), and 857–1037 (KAAP…ELAP). Phosphoserine occurs at positions 608 and 636. Composition is skewed to basic and acidic residues over residues 654–665 (EAAEQREKKEAE), 729–744 (EIRQQRQEGEEDKPKP), and 758–767 (GQEEEAEHAG). Threonine 769 is modified (phosphothreonine). The residue at position 887 (serine 887) is a Phosphoserine. A compositionally biased stretch (polar residues) spans 923–936 (RQSGPTKAPVQTQA). Composition is skewed to basic and acidic residues over residues 954–973 (PEVRSEAPRAVHIPPEEQHK), 1004–1013 (ENAKPNRDLK), and 1026–1037 (DLASHPEQELAP).

The protein belongs to the amino acid/polyamine transporter 2 family. As to expression, expressed in neurons, astrocytes and epithelial cells scattered throughout the central nervous system structures including striatum, ependyma, cerebral cortex, hippocampus, hypothalamus, thalamus, pons, and cerebellum (at protein level). Highly expressed in paraventricular hypothalamic nucleus, suprachiasmatic nucleus, anterior hypothalamic area central part, in lateral ventricule and in dorsal 3rd ventricule (at protein level). Expressed in choroid plexus epithelial cells (at protein level).

It is found in the membrane. It catalyses the reaction L-glutamate(out) = L-glutamate(in). It carries out the reaction L-glutamine(out) = L-glutamine(in). The enzyme catalyses L-alanine(in) = L-alanine(out). The catalysed reaction is L-serine(in) = L-serine(out). It catalyses the reaction L-leucine(in) = L-leucine(out). Facilitates bidirectional transport of amino acids. May act as a glutamate sensor that regulates glutamate-glutamine cycle and mTOR signaling in the brain. The transport mechanism remains to be elucidated. This is Solute carrier family 38 member 10 from Mus musculus (Mouse).